We begin with the raw amino-acid sequence, 426 residues long: 3-phosphoshikimate 1-carboxyvinyltransferase (426 aa).

3-phosphoshikimate contacts are provided by lysine 23, serine 24, and arginine 28. Lysine 23 is a phosphoenolpyruvate binding site. Phosphoenolpyruvate-binding residues include glycine 96 and arginine 124. 3-phosphoshikimate-binding residues include threonine 170, serine 171, glutamine 172, serine 198, aspartate 314, and lysine 341. Glutamine 172 contacts phosphoenolpyruvate. The active-site Proton acceptor is aspartate 314. Phosphoenolpyruvate-binding residues include arginine 345, arginine 386, and lysine 411.

The protein belongs to the EPSP synthase family. As to quaternary structure, monomer.

The protein resides in the cytoplasm. It catalyses the reaction 3-phosphoshikimate + phosphoenolpyruvate = 5-O-(1-carboxyvinyl)-3-phosphoshikimate + phosphate. It functions in the pathway metabolic intermediate biosynthesis; chorismate biosynthesis; chorismate from D-erythrose 4-phosphate and phosphoenolpyruvate: step 6/7. Catalyzes the transfer of the enolpyruvyl moiety of phosphoenolpyruvate (PEP) to the 5-hydroxyl of shikimate-3-phosphate (S3P) to produce enolpyruvyl shikimate-3-phosphate and inorganic phosphate. This Trichormus variabilis (strain ATCC 29413 / PCC 7937) (Anabaena variabilis) protein is 3-phosphoshikimate 1-carboxyvinyltransferase.